The following is a 353-amino-acid chain: F-box protein At3g58530 (353 aa).

One can recognise an F-box; degenerate domain in the interval 8-56; the sequence is EEEEETWRREIVTSVMRLVSTRLPQTDLISLLLVSPWLYRTLISYPSIW.

In Arabidopsis thaliana (Mouse-ear cress), this protein is F-box protein At3g58530.